A 390-amino-acid chain; its full sequence is Chorismate synthase (390 aa).

Positions 39 and 45 each coordinate NADP(+). FMN-binding positions include 132–134 (RSS), 253–254 (NA), Gly-298, 313–317 (KPIPT), and Arg-339.

This sequence belongs to the chorismate synthase family. Homotetramer. FMNH2 serves as cofactor.

It carries out the reaction 5-O-(1-carboxyvinyl)-3-phosphoshikimate = chorismate + phosphate. The protein operates within metabolic intermediate biosynthesis; chorismate biosynthesis; chorismate from D-erythrose 4-phosphate and phosphoenolpyruvate: step 7/7. Its function is as follows. Catalyzes the anti-1,4-elimination of the C-3 phosphate and the C-6 proR hydrogen from 5-enolpyruvylshikimate-3-phosphate (EPSP) to yield chorismate, which is the branch point compound that serves as the starting substrate for the three terminal pathways of aromatic amino acid biosynthesis. This reaction introduces a second double bond into the aromatic ring system. The protein is Chorismate synthase of Bacillus subtilis (strain 168).